The sequence spans 450 residues: MRCIVLAAGMGVRMNSKYAKVTHTVCGKPMIRWILDTVLNLLDKVCVVVGHDADSVKKLLPENVEVVHQSQQLGTGHAVMSARNFIDPADNLLILYGDMPLITEGTIQKIINSHNLSNCDATVVSVEMNDPTGYGRIVRDKSGKFVKIVEESEASNREKAIVEVNTGVYIFNGRKLLEVLPMINCKNKKGEYYLTDVFAFLERVNIYKSERSCEFIGINNRIQLAQAEKFRRQWILEELMIKGVTIVDPETTYIDADVKIGRDSIIYPMSFIHGDTKIGEDCIIGPMTRIIDSYIGDRVTIVRSECKGARIMSDVSVGPFSRLREGTVLCNGVKIGNFVEIKNSEIDQNTKAQHLTYLGDAVVGKSVNIGAGTITCNFDGKRKNQTVIEDEVFIGSNTALVAPVKVEKGAFVAAGSTINRNVPAWSLAIARARQEIKLNWVIDKRKKEED.

Residues 1 to 221 (MRCIVLAAGM…SCEFIGINNR (221 aa)) form a pyrophosphorylase region. Residues 6–9 (LAAG), Lys20, Gln69, 74–75 (GT), 96–98 (YGD), Gly135, Glu150, Asn165, and Asn219 contribute to the UDP-N-acetyl-alpha-D-glucosamine site. Residue Asp98 coordinates Mg(2+). A Mg(2+)-binding site is contributed by Asn219. The interval 222–242 (IQLAQAEKFRRQWILEELMIK) is linker. Residues 243 to 450 (GVTIVDPETT…VIDKRKKEED (208 aa)) form an N-acetyltransferase region. UDP-N-acetyl-alpha-D-glucosamine is bound by residues Arg324 and Lys342. The active-site Proton acceptor is His354. Residues Tyr357 and Asn368 each contribute to the UDP-N-acetyl-alpha-D-glucosamine site. Residues Ala371, Ser396, Ala414, and Arg431 each coordinate acetyl-CoA.

In the N-terminal section; belongs to the N-acetylglucosamine-1-phosphate uridyltransferase family. This sequence in the C-terminal section; belongs to the transferase hexapeptide repeat family. Homotrimer. It depends on Mg(2+) as a cofactor.

The protein resides in the cytoplasm. The enzyme catalyses alpha-D-glucosamine 1-phosphate + acetyl-CoA = N-acetyl-alpha-D-glucosamine 1-phosphate + CoA + H(+). The catalysed reaction is N-acetyl-alpha-D-glucosamine 1-phosphate + UTP + H(+) = UDP-N-acetyl-alpha-D-glucosamine + diphosphate. Its pathway is nucleotide-sugar biosynthesis; UDP-N-acetyl-alpha-D-glucosamine biosynthesis; N-acetyl-alpha-D-glucosamine 1-phosphate from alpha-D-glucosamine 6-phosphate (route II): step 2/2. The protein operates within nucleotide-sugar biosynthesis; UDP-N-acetyl-alpha-D-glucosamine biosynthesis; UDP-N-acetyl-alpha-D-glucosamine from N-acetyl-alpha-D-glucosamine 1-phosphate: step 1/1. It functions in the pathway bacterial outer membrane biogenesis; LPS lipid A biosynthesis. In terms of biological role, catalyzes the last two sequential reactions in the de novo biosynthetic pathway for UDP-N-acetylglucosamine (UDP-GlcNAc). The C-terminal domain catalyzes the transfer of acetyl group from acetyl coenzyme A to glucosamine-1-phosphate (GlcN-1-P) to produce N-acetylglucosamine-1-phosphate (GlcNAc-1-P), which is converted into UDP-GlcNAc by the transfer of uridine 5-monophosphate (from uridine 5-triphosphate), a reaction catalyzed by the N-terminal domain. The sequence is that of Bifunctional protein GlmU from Pseudothermotoga lettingae (strain ATCC BAA-301 / DSM 14385 / NBRC 107922 / TMO) (Thermotoga lettingae).